The chain runs to 546 residues: Aladin (546 aa).

C2 is modified (N-acetylcysteine). Phosphoserine is present on S33. WD repeat units lie at residues W149 to L188, R191 to R230, G243 to L282, and F285 to W324. Phosphoserine is present on residues S495, S511, S522, S525, and S541. Residues R500–L546 form a disordered region. Residues Q534–L546 show a composition bias toward low complexity. The short motif at S544–L546 is the Microbody targeting signal element.

In terms of assembly, interacts with NDC1, the interaction is required for nuclear pore localization. Interacts with the inactive form aurora kinase AURKA. Interacts with PGRMC2. As to expression, widely expressed. Particularly abundant in cerebellum, corpus callosum, adrenal gland, pituitary gland, gastrointestinal structures and fetal lung.

It localises to the nucleus. Its subcellular location is the nuclear pore complex. The protein localises to the cytoplasm. It is found in the cytoskeleton. The protein resides in the spindle pole. It localises to the nucleus envelope. Plays a role in the normal development of the peripheral and central nervous system. Required for the correct localization of aurora kinase AURKA and the microtubule minus end-binding protein NUMA1 as well as a subset of AURKA targets which ensures proper spindle formation and timely chromosome alignment. This chain is Aladin (Aaas), found in Mus musculus (Mouse).